A 249-amino-acid chain; its full sequence is MSEAAETLDGWYSLHLFYAVDWTTFRLIAEDDREAMITELETFVKDKAVARESHQGDHAIYNITGQKADLLLWFLRPEMKELNQIENEFNKLRIADYLIPTYSYVSVIELSNYLAGKSDEDPYENPHVKARLYPELPHSEYICFYPMDKRRNETYNWYMLPIEDRKTLMYNHGMIGRKYAGKIKQFITGSVGFDDYEWGVTLFSNDVLQFKKIVYEMRFDETTARYGEFGSFYIGHILNIEDFKQFFSI.

Fe-coproporphyrin III-binding positions include Arg-131, 145–149, His-172, and Gln-185; that span reads YPMDK. Tyr-145 is an active-site residue.

The protein belongs to the ChdC family. Type 1 subfamily. Fe-coproporphyrin III serves as cofactor.

The catalysed reaction is Fe-coproporphyrin III + 2 H2O2 + 2 H(+) = heme b + 2 CO2 + 4 H2O. It catalyses the reaction Fe-coproporphyrin III + H2O2 + H(+) = harderoheme III + CO2 + 2 H2O. The enzyme catalyses harderoheme III + H2O2 + H(+) = heme b + CO2 + 2 H2O. The protein operates within porphyrin-containing compound metabolism; protoheme biosynthesis. Its function is as follows. Involved in coproporphyrin-dependent heme b biosynthesis. Catalyzes the decarboxylation of Fe-coproporphyrin III (coproheme) to heme b (protoheme IX), the last step of the pathway. The reaction occurs in a stepwise manner with a three-propionate intermediate. In Staphylococcus epidermidis (strain ATCC 35984 / DSM 28319 / BCRC 17069 / CCUG 31568 / BM 3577 / RP62A), this protein is Coproheme decarboxylase.